Consider the following 392-residue polypeptide: O-phospho-L-seryl-tRNA:Cys-tRNA synthase 1 (392 aa).

Pyridoxal 5'-phosphate-binding positions include 85–86, asparagine 190, and 213–215; these read AR and SGH. Lysine 216 is subject to N6-(pyridoxal phosphate)lysine.

Belongs to the SepCysS family. As to quaternary structure, homodimer. Interacts with SepRS. Requires pyridoxal 5'-phosphate as cofactor.

The catalysed reaction is O-phospho-L-seryl-tRNA(Cys) + hydrogen sulfide + H(+) = L-cysteinyl-tRNA(Cys) + phosphate. Converts O-phospho-L-seryl-tRNA(Cys) (Sep-tRNA(Cys)) to L-cysteinyl-tRNA(Cys) (Cys-tRNA(Cys)). The chain is O-phospho-L-seryl-tRNA:Cys-tRNA synthase 1 from Methanoregula boonei (strain DSM 21154 / JCM 14090 / 6A8).